Consider the following 507-residue polypeptide: Probable serine/threonine-protein kinase DDB_G0268078 (507 aa).

The Protein kinase domain occupies 4–286 (YQFIKQVGDG…PLQALQHRYF (283 aa)). ATP is bound by residues 10-18 (VGDGAYGDV) and Lys33. Catalysis depends on Asp125, which acts as the Proton acceptor. A compositionally biased stretch (low complexity) spans 323–347 (NYSNNNNNNNLNSNSENLNNVNKNN). Disordered regions lie at residues 323–364 (NYSN…PKNS), 381–404 (NVNN…KLDS), and 428–507 (QQPP…NSKL). Residues 348–361 (QQPHSPQKIQTPKP) show a composition bias toward polar residues. The span at 381–399 (NVNNNNNNYNSNTTSGYYN) shows a compositional bias: low complexity. The span at 429–450 (QPPPQSQPPQSQPPPQSQPPPI) shows a compositional bias: pro residues. Residues 451–470 (LTQQQQQQQQQQQQQQQLPS) are compositionally biased toward low complexity. 2 stretches are compositionally biased toward polar residues: residues 471-481 (KTTIYHNTNHL) and 491-507 (RGIS…NSKL).

This sequence belongs to the protein kinase superfamily. CMGC Ser/Thr protein kinase family. CDC2/CDKX subfamily.

It carries out the reaction L-seryl-[protein] + ATP = O-phospho-L-seryl-[protein] + ADP + H(+). The catalysed reaction is L-threonyl-[protein] + ATP = O-phospho-L-threonyl-[protein] + ADP + H(+). This is Probable serine/threonine-protein kinase DDB_G0268078 from Dictyostelium discoideum (Social amoeba).